Here is a 664-residue protein sequence, read N- to C-terminus: Intraflagellar transport protein 70A2 (664 aa).

TPR repeat units lie at residues aspartate 11–serine 44, arginine 45–leucine 78, proline 153–glutamine 186, aspartate 188–glutamine 220, glutamine 395–isoleucine 423, proline 424–histidine 456, and valine 458–asparagine 491. Residues tyrosine 507–aspartate 534 are a coiled coil. A TPR 8 repeat occupies cysteine 543–lysine 576.

It belongs to the TTC30/dfy-1/fleer family. In terms of assembly, interacts wit the IFT B complex component IFT52.

It is found in the cell projection. The protein localises to the cilium. Required for polyglutamylation of axonemal tubulin. Plays a role in anterograde intraflagellar transport (IFT), the process by which cilia precursors are transported from the base of the cilium to the site of their incorporation at the tip. The sequence is that of Intraflagellar transport protein 70A2 (Ift70a2) from Rattus norvegicus (Rat).